We begin with the raw amino-acid sequence, 322 residues long: ATP-dependent 6-phosphofructokinase (322 aa).

Glycine 11 lines the ATP pocket. ADP is bound at residue 21–25; the sequence is RAVVR. Residues 72–73 and 102–105 each bind ATP; these read RC and GDGS. A Mg(2+)-binding site is contributed by aspartate 103. 127–129 is a substrate binding site; that stretch reads TID. Residue aspartate 129 is the Proton acceptor of the active site. Arginine 156 provides a ligand contact to ADP. Substrate is bound by residues arginine 164 and 171–173; that span reads MGR. Residues 187–189, arginine 213, and 215–217 contribute to the ADP site; these read GAE and KKH. Substrate contacts are provided by residues glutamate 224, arginine 245, and 251–254; that span reads HVQR.

It belongs to the phosphofructokinase type A (PFKA) family. ATP-dependent PFK group I subfamily. Prokaryotic clade 'B1' sub-subfamily. As to quaternary structure, homotetramer. Mg(2+) is required as a cofactor.

The protein resides in the cytoplasm. It carries out the reaction beta-D-fructose 6-phosphate + ATP = beta-D-fructose 1,6-bisphosphate + ADP + H(+). The protein operates within carbohydrate degradation; glycolysis; D-glyceraldehyde 3-phosphate and glycerone phosphate from D-glucose: step 3/4. Allosterically activated by ADP and other diphosphonucleosides, and allosterically inhibited by phosphoenolpyruvate. In terms of biological role, catalyzes the phosphorylation of D-fructose 6-phosphate to fructose 1,6-bisphosphate by ATP, the first committing step of glycolysis. The chain is ATP-dependent 6-phosphofructokinase from Staphylococcus aureus (strain JH1).